Here is a 339-residue protein sequence, read N- to C-terminus: DNA-directed RNA polymerase subunit alpha (339 aa).

Residues Met1–Glu233 are alpha N-terminal domain (alpha-NTD). The interval Lys264–Phe339 is alpha C-terminal domain (alpha-CTD).

It belongs to the RNA polymerase alpha chain family. In terms of assembly, in plastids the minimal PEP RNA polymerase catalytic core is composed of four subunits: alpha, beta, beta', and beta''. When a (nuclear-encoded) sigma factor is associated with the core the holoenzyme is formed, which can initiate transcription.

It is found in the plastid. Its subcellular location is the chloroplast. The catalysed reaction is RNA(n) + a ribonucleoside 5'-triphosphate = RNA(n+1) + diphosphate. In terms of biological role, DNA-dependent RNA polymerase catalyzes the transcription of DNA into RNA using the four ribonucleoside triphosphates as substrates. This Festucopsis serpentini protein is DNA-directed RNA polymerase subunit alpha.